Consider the following 166-residue polypeptide: Large ribosomal subunit protein uL10 (166 aa).

The protein belongs to the universal ribosomal protein uL10 family. In terms of assembly, part of the ribosomal stalk of the 50S ribosomal subunit. The N-terminus interacts with L11 and the large rRNA to form the base of the stalk. The C-terminus forms an elongated spine to which L12 dimers bind in a sequential fashion forming a multimeric L10(L12)X complex.

Forms part of the ribosomal stalk, playing a central role in the interaction of the ribosome with GTP-bound translation factors. The protein is Large ribosomal subunit protein uL10 of Ureaplasma parvum serovar 3 (strain ATCC 27815 / 27 / NCTC 11736).